The chain runs to 302 residues: tRNA pseudouridine synthase B (302 aa).

Histidine 40 lines the substrate pocket. Aspartate 45 (nucleophile) is an active-site residue. Residues tyrosine 73, tyrosine 178, and leucine 199 each coordinate substrate.

The protein belongs to the pseudouridine synthase TruB family. Type 1 subfamily.

The catalysed reaction is uridine(55) in tRNA = pseudouridine(55) in tRNA. Functionally, responsible for synthesis of pseudouridine from uracil-55 in the psi GC loop of transfer RNAs. This is tRNA pseudouridine synthase B from Buchnera aphidicola subsp. Baizongia pistaciae (strain Bp).